Consider the following 99-residue polypeptide: Small ribosomal subunit protein bS20 (99 aa).

It belongs to the bacterial ribosomal protein bS20 family.

Binds directly to 16S ribosomal RNA. This is Small ribosomal subunit protein bS20 from Prochlorococcus marinus (strain SARG / CCMP1375 / SS120).